A 328-amino-acid chain; its full sequence is Phenylalanine--tRNA ligase alpha subunit (328 aa).

A Mg(2+)-binding site is contributed by Glu245.

This sequence belongs to the class-II aminoacyl-tRNA synthetase family. Phe-tRNA synthetase alpha subunit type 1 subfamily. As to quaternary structure, tetramer of two alpha and two beta subunits. Requires Mg(2+) as cofactor.

The protein resides in the cytoplasm. The catalysed reaction is tRNA(Phe) + L-phenylalanine + ATP = L-phenylalanyl-tRNA(Phe) + AMP + diphosphate + H(+). The protein is Phenylalanine--tRNA ligase alpha subunit of Helicobacter pylori (strain G27).